The primary structure comprises 129 residues: Large ribosomal subunit protein uL22 (129 aa).

This sequence belongs to the universal ribosomal protein uL22 family. Part of the 50S ribosomal subunit.

This protein binds specifically to 23S rRNA; its binding is stimulated by other ribosomal proteins, e.g. L4, L17, and L20. It is important during the early stages of 50S assembly. It makes multiple contacts with different domains of the 23S rRNA in the assembled 50S subunit and ribosome. In terms of biological role, the globular domain of the protein is located near the polypeptide exit tunnel on the outside of the subunit, while an extended beta-hairpin is found that lines the wall of the exit tunnel in the center of the 70S ribosome. The chain is Large ribosomal subunit protein uL22 from Aster yellows witches'-broom phytoplasma (strain AYWB).